A 204-amino-acid polypeptide reads, in one-letter code: Holliday junction branch migration complex subunit RuvA (204 aa).

The domain I stretch occupies residues 1–63 (MIASLRGTVI…EDAMKLYGFI (63 aa)). Residues 64–142 (DDQSREMFAL…AYTVGVVDDG (79 aa)) are domain II. Positions 143 to 151 (APTAPTQGV) are flexible linker. The domain III stretch occupies residues 152–204 (APVVVVDQVTQALTGLGFTEKQADDAVAAVLSADPGLDTSAALRAALAKLGGK).

Belongs to the RuvA family. As to quaternary structure, homotetramer. Forms an RuvA(8)-RuvB(12)-Holliday junction (HJ) complex. HJ DNA is sandwiched between 2 RuvA tetramers; dsDNA enters through RuvA and exits via RuvB. An RuvB hexamer assembles on each DNA strand where it exits the tetramer. Each RuvB hexamer is contacted by two RuvA subunits (via domain III) on 2 adjacent RuvB subunits; this complex drives branch migration. In the full resolvosome a probable DNA-RuvA(4)-RuvB(12)-RuvC(2) complex forms which resolves the HJ.

Its subcellular location is the cytoplasm. Functionally, the RuvA-RuvB-RuvC complex processes Holliday junction (HJ) DNA during genetic recombination and DNA repair, while the RuvA-RuvB complex plays an important role in the rescue of blocked DNA replication forks via replication fork reversal (RFR). RuvA specifically binds to HJ cruciform DNA, conferring on it an open structure. The RuvB hexamer acts as an ATP-dependent pump, pulling dsDNA into and through the RuvAB complex. HJ branch migration allows RuvC to scan DNA until it finds its consensus sequence, where it cleaves and resolves the cruciform DNA. This is Holliday junction branch migration complex subunit RuvA from Corynebacterium efficiens (strain DSM 44549 / YS-314 / AJ 12310 / JCM 11189 / NBRC 100395).